Reading from the N-terminus, the 745-residue chain is Centromere protein I (745 aa).

A compositionally biased stretch (polar residues) spans 1 to 27; that stretch reads MATPRLTRNSQQQNRISQGSNSRQTTL. The disordered stretch occupies residues 1-58; sequence MATPRLTRNSQQQNRISQGSNSRQTTLLDWKVKDKAGNSKSVLEESSSLEDSNHADDQ. Positions 39-50 are enriched in low complexity; it reads SKSVLEESSSLE.

Belongs to the CENP-I/CTF3 family. As to quaternary structure, component of the CENPA-CAD complex, composed of CENPI, CENPK, CENPL, CENPO, CENPP, CENPQ, CENPR and CENPS. The CENPA-CAD complex interacts with the CENPA-NAC complex, at least composed of CENPA, CENPC, CENPH, CENPM, CENPN, CENPT and CENPU. Interacts with SENP6. In terms of processing, sumoylated. Sumoylated form can be polyubiquitinated by RNF4, leading to its degradation. Desumoylation by SENP6 prevents its degradation. As to expression, highly expressed in testis, ovary and spleen. A much lower mRNA level is found in brain and lung, and no expression is detected in liver, kidney, heart, muscle, pituitary gland, prostate, epididymis and seminal vesicle.

The protein localises to the nucleus. Its subcellular location is the chromosome. It localises to the centromere. In terms of biological role, component of the CENPA-CAD (nucleosome distal) complex, a complex recruited to centromeres which is involved in assembly of kinetochore proteins, mitotic progression and chromosome segregation. May be involved in incorporation of newly synthesized CENPA into centromeres via its interaction with the CENPA-NAC complex. Required for the localization of CENPF, MAD1L1 and MAD2 (MAD2L1 or MAD2L2) to kinetochores. Involved in the response of gonadal tissues to follicle-stimulating hormone. The polypeptide is Centromere protein I (Cenpi) (Rattus norvegicus (Rat)).